Here is a 26-residue protein sequence, read N- to C-terminus: Photosystem II stability/assembly factor HCF136, chloroplastic (26 aa).

This sequence belongs to the Ycf48 family.

It is found in the plastid. The protein localises to the chloroplast thylakoid lumen. In terms of biological role, essential for photosystem II (PSII) biogenesis; required for assembly of an early intermediate in PSII assembly that includes D2 (psbD) and cytochrome b559. This chain is Photosystem II stability/assembly factor HCF136, chloroplastic, found in Populus euphratica (Euphrates poplar).